Here is a 335-residue protein sequence, read N- to C-terminus: RVS161-like protein RVS162 (335 aa).

The region spanning 17–310 (VMLKTGHIEQ…LDAQTRQDYI (294 aa)) is the BAR domain. Residues 30–56 (KEYEFQEKRYRTMEENSIKLQKNLRLY) are a coiled coil. The segment at 105–127 (HEEEGEEKEEEENDNTTTTTTTT) is disordered. The span at 107–118 (EEGEEKEEEEND) shows a compositional bias: acidic residues. Positions 222 to 259 (TNIIELNHNQYEEKLKIYNQELTEVESKYVEINNQLLI) form a coiled coil.

Its subcellular location is the cytoplasm. It is found in the cytoskeleton. Component of a cytoskeletal structure that is required for membrane curvature. The protein is RVS161-like protein RVS162 of Candida albicans (strain SC5314 / ATCC MYA-2876) (Yeast).